Here is a 297-residue protein sequence, read N- to C-terminus: 4-hydroxy-tetrahydrodipicolinate synthase (297 aa).

Thr-45 contributes to the pyruvate binding site. Tyr-133 acts as the Proton donor/acceptor in catalysis. The active-site Schiff-base intermediate with substrate is the Lys-161. Ile-203 contributes to the pyruvate binding site.

The protein belongs to the DapA family. As to quaternary structure, homotetramer; dimer of dimers.

It localises to the cytoplasm. It catalyses the reaction L-aspartate 4-semialdehyde + pyruvate = (2S,4S)-4-hydroxy-2,3,4,5-tetrahydrodipicolinate + H2O + H(+). Its pathway is amino-acid biosynthesis; L-lysine biosynthesis via DAP pathway; (S)-tetrahydrodipicolinate from L-aspartate: step 3/4. Its function is as follows. Catalyzes the condensation of (S)-aspartate-beta-semialdehyde [(S)-ASA] and pyruvate to 4-hydroxy-tetrahydrodipicolinate (HTPA). The sequence is that of 4-hydroxy-tetrahydrodipicolinate synthase from Buchnera aphidicola subsp. Cinara cedri (strain Cc).